We begin with the raw amino-acid sequence, 5206 residues long: Multifunctional-autoprocessing repeats-in-toxin (5206 aa).

Residues 1 to 19 (MGKPFWRSVEYFFTGNYSA) form the signal peptide. RtxA repeat units follow at residues 101-118 (GAAG…GDVS), 121-138 (GAAA…GNVT), 141-157 (GAGG…QGNL), 161-184 (GAGA…GDVT), 187-204 (GAGA…GNIT), 207-224 (GAGA…GDIT), 255-272 (GVGG…GDIH), 275-291 (GGGA…GSSF), 584-601 (GAGG…GNVY), 604-620 (GGGI…FGNT), 624-641 (GGGA…GDLT), 644-658 (GAGL…SKQG), 741-753 (AGGA…VGDG), 759-771 (MLGG…HISG), 782-798 (ALGG…GNTL), 801-816 (MGGG…DGTT), 820-835 (MVGG…NGDT), 841-855 (GVGN…GQTL), 858-875 (MGAA…TSIA), 877-891 (MIGA…GEGN), 896-910 (MGGL…GNGD), 915-932 (MVAE…MSVA), 934-950 (MLAK…GTTL), 972-984 (MIGQ…KVGN), 991-1006 (MVGK…DGTS), 1031-1043 (GKAN…GDGL), 1067-1079 (AAAK…HVGD), 1087-1102 (AGKG…GTTV), 1110-1122 (GNVM…GTTI), 1125-1142 (AKGK…LGVN), 1145-1159 (WGQA…DGDR), 1163-1179 (AKGE…GKEV), 1184-1199 (GKAN…DDYT), 1201-1217 (AWGK…GRNV), 1220-1236 (AKGE…GDSF), 1242-1256 (KGNI…MQVT), 1258-1275 (AKGK…LSVT), 1296-1313 (AWGK…LNVA), and 1315-1332 (MKGK…LNIN). The segment covering 1606-1626 (SQQANAVSEHATQNQASQNAL) has biased composition (polar residues). 2 disordered regions span residues 1606–1682 (SQQA…ESEA) and 1738–1895 (IAAA…EQEA). The segment covering 1627–1646 (SDKERAEADRQRLEQEKQKQ) has biased composition (basic and acidic residues). Residues 1652-1671 (GSQSQLESTDQQALGNNGQA) are compositionally biased toward polar residues. The segment covering 1778-1805 (AEAKADAETRKADAVAKSNDAKQAESDA) has biased composition (basic and acidic residues). Over residues 1825-1834 (NKANQAQNDA) the composition is skewed to polar residues. The span at 1835–1849 (KGTKQNEGDRPDREG) shows a compositional bias: basic and acidic residues. A compositionally biased stretch (polar residues) spans 1870 to 1880 (SHITTDSQTNA). The segment at 2377 to 2461 (ELMSVTELLD…SLLNQVNSRL (85 aa)) is membrane localization region (MLD). Positions 2537–2901 (EYGQVVADTI…HQVTDVLDAL (365 aa)) are rho inactivation domain (RID). The segment at 2998–3113 (VVLFLHGSGS…MPSMTKAITA (116 aa)) is ABH effector region. The Peptidase C80 domain occupies 4111–4295 (PTADGGESRF…AENNKVSLSW (185 aa)). Residues 4117–4119 (ESR), 4144–4145 (KH), and Arg-4175 each bind 1D-myo-inositol hexakisphosphate. Residue His-4181 is the For cysteine protease activity of the active site. Ser-4226 is a binding site for 1D-myo-inositol hexakisphosphate. Cys-4230 functions as the Nucleophile; for cysteine protease activity in the catalytic mechanism. 1D-myo-inositol hexakisphosphate-binding positions include 4259–4261 (SVR), 4272–4273 (RK), Lys-4285, and Lys-4290. Disordered regions lie at residues 4333–4362 (GAIG…ANNK) and 4738–4779 (LKEK…ETPD). Low complexity predominate over residues 4750-4762 (SSVSVNGASVNSA).

Requires Mg(2+) as cofactor.

It is found in the secreted. Its subcellular location is the host cytoplasm. The protein localises to the host cytosol. The protein resides in the host cell membrane. It catalyses the reaction L-lysyl-/S-(2E,6E,10E)-geranylgeranyl-L-cysteinyl-[protein] + hexadecanoyl-CoA = N(6)-hexadecanoyl-L-lysyl-/S-(2E,6E,10E)-geranylgeranyl-L-cysteinyl-[protein] + CoA + H(+). The enzyme catalyses L-lysyl-/S-(2E,6E,10E)-geranylgeranyl-L-cysteinyl-[protein] + dodecanoyl-CoA = N(6)-dodecanoyl-L-lysyl-/S-(2E,6E,10E)-geranylgeranyl-L-cysteinyl-[protein] + CoA + H(+). It carries out the reaction L-lysyl-/S-(2E,6E,10E)-geranylgeranyl-L-cysteinyl-[protein] + decanoyl-CoA = N(6)-decanoyl-L-lysyl-/S-(2E,6E,10E)-geranylgeranyl-L-cysteinyl-[protein] + CoA + H(+). In terms of biological role, precursor of a multifunctional toxin that causes destruction of the actin cytoskeleton by covalent cross-linking of actin and inactivation of Rho GTPases when translocated into the host cytoplasm. Upon translocation into the host cell, undergoes autoprocessing in cis mediated by the peptidase C80 domain (also named CPD domain): the protease activity is activated upon binding inositol hexakisphosphate (InsP6) present at the host cell membrane and delivers the Cysteine protease domain-containing toxin F3 chain to the host cytosol. The Cysteine protease domain-containing toxin F3 chain will then further cleave and release effector toxin chains that cause disassembly of the actin cytoskeleton and enhance V.vulnificus colonization of the small intestine, possibly by facilitating evasion of phagocytic cells. Its function is as follows. Following autocatalytic cleavage in cis, this chain mediates processing in trans to release other individual toxin chains to the host cytosol. Released effector toxin chains cause disassembly of the actin cytoskeleton and enhance V.vulnificus colonization of the small intestine, possibly by facilitating evasion of phagocytic cells. Functionally, actin-directed toxin that catalyzes the covalent cross-linking of host cytoplasmic monomeric actin. Mediates the cross-link between 'Lys-50' of one monomer and 'Glu-270' of another actin monomer, resulting in formation of highly toxic actin oligomers that cause cell rounding. The toxin can be highly efficient at very low concentrations by acting on formin homology family proteins: toxic actin oligomers bind with high affinity to formins and adversely affect both nucleation and elongation abilities of formins, causing their potent inhibition in both profilin-dependent and independent manners. Acts as an acid--amino-acid ligase that transfers the gamma-phosphoryl group of ATP to the 'Glu-270' actin residue, resulting in the formation of an activated acyl phosphate intermediate. This intermediate is further hydrolyzed and the energy of hydrolysis is utilized for the formation of the amide bond between actin subunits. N-epsilon-fatty acyltransferase that mediates lysine-palmitoylation of host Rho GTPase proteins, with a strong preference for host Rac1. After delivery to the host cytosol, localizes to the host cell membrane where it palmitoylates host Rho GTPase proteins, resulting in loss of all active GTP-bound Rho and subsequent actin depolymerization. Prenylation of host Rac1 at the C-terminus is required for lysine-palmitoylation. In terms of biological role, indirectly activates the small GTPase CDC42. This chain is Multifunctional-autoprocessing repeats-in-toxin, found in Vibrio vulnificus.